Reading from the N-terminus, the 2618-residue chain is Mediator of RNA polymerase II transcription subunit 13 (2618 aa).

3 stretches are compositionally biased toward low complexity: residues 232-255 (FAAA…VPNP), 509-519 (TPASGTGSLSA), and 532-543 (DSKQLVQQQIQQ). 10 disordered regions span residues 232–279 (FAAA…AAPP), 509–543 (TPAS…QIQQ), 569–731 (GNTP…SGGP), 916–957 (LNIK…AEGL), 970–995 (TSSN…NGGC), 1036–1055 (TKMF…SSPC), 1268–1384 (PRTP…TGVV), 1521–1557 (ASAS…ITGY), 1614–1633 (SRKN…LDKI), and 1985–2060 (KTLL…GETK). Phosphothreonine occurs at positions 571 and 575. 3 stretches are compositionally biased toward polar residues: residues 581-590 (STYSRNSLGG), 634-643 (APTSVSNLQQ), and 669-681 (SITA…QTPS). A compositionally biased stretch (gly residues) spans 692 to 706 (AGGGPAGGQGLGTGP). Residues 711-723 (AQQPATPTAATSA) show a composition bias toward low complexity. Gly residues predominate over residues 939-949 (NSSGGGSGSGG). Over residues 1272–1295 (LTPSTVPQPLSSGGSQYLLNQLNC) the composition is skewed to polar residues. 2 stretches are compositionally biased toward gly residues: residues 1375–1384 (GLGGGATGVV) and 1528–1538 (AGSGHGHGPNG). Residues 1539-1553 (GSNSSSCTPPSSNPH) show a composition bias toward low complexity. The span at 1614 to 1629 (SRKNQNKQGPGETSSA) shows a compositional bias: polar residues. Residues 1993-2014 (GSGNSHSKGGSSCSSNSSSVSG) show a composition bias toward low complexity. Phosphoserine occurs at positions 2472 and 2475.

This sequence belongs to the Mediator complex subunit 13 family. As to quaternary structure, component of the Cdk8 module of the Mediator complex, composed of CycC, Cdk8, kto and skd.

It localises to the nucleus. In terms of biological role, component of the Mediator complex, a coactivator involved in the regulated transcription of nearly all RNA polymerase II-dependent genes. Mediator functions as a bridge to convey information from gene-specific regulatory proteins to the basal RNA polymerase II transcription machinery. Mediator is recruited to promoters by direct interactions with regulatory proteins and serves as a scaffold for the assembly of a functional preinitiation complex with RNA polymerase II and the general transcription factors. Required for leg and eye development and macrochaete specification or differentiation. Negatively regulates sex comb development. Required for activated transcription of the MtnB and MtnD genes. The protein is Mediator of RNA polymerase II transcription subunit 13 (skd) of Drosophila melanogaster (Fruit fly).